The primary structure comprises 643 residues: Threonine--tRNA ligase (643 aa).

The region spanning 3–64 is the TGS domain; sequence DMINITFPDG…QEDGAVEIIT (62 aa). The tract at residues 245–542 is catalytic; sequence DHRKLGKELK…LIEEHKGALP (298 aa). 3 residues coordinate Zn(2+): Cys-338, His-389, and His-519.

It belongs to the class-II aminoacyl-tRNA synthetase family. Homodimer. The cofactor is Zn(2+).

It localises to the cytoplasm. The catalysed reaction is tRNA(Thr) + L-threonine + ATP = L-threonyl-tRNA(Thr) + AMP + diphosphate + H(+). Functionally, catalyzes the attachment of threonine to tRNA(Thr) in a two-step reaction: L-threonine is first activated by ATP to form Thr-AMP and then transferred to the acceptor end of tRNA(Thr). Also edits incorrectly charged L-seryl-tRNA(Thr). The chain is Threonine--tRNA ligase from Bacillus velezensis (strain DSM 23117 / BGSC 10A6 / LMG 26770 / FZB42) (Bacillus amyloliquefaciens subsp. plantarum).